The following is a 223-amino-acid chain: Kinetochore protein Spc25 (223 aa).

A coiled-coil region spans residues 65–115; sequence LRCGELEKRANFMEELTQELEATKQRNLVMRDQIKQLNVLARQHRNEVMES.

This sequence belongs to the SPC25 family. In terms of assembly, component of the Ndc80 complex, which is composed of Ndc80, Nuf2 and Spc25.

The protein localises to the nucleus. It localises to the chromosome. Its subcellular location is the centromere. It is found in the kinetochore. Functionally, acts as a component of the essential kinetochore-associated Ndc80 complex, which is required for chromosome segregation and spindle checkpoint activity during meiosis and mitosis. Required for kinetochore integrity and the organization of stable microtubule binding sites in the outer plate of the kinetochore. Participates in SAC signaling that responds specifically to disruptions in spindle microtubule dynamics. The NDC80 complex synergistically enhances the affinity of the SKA1 complex for microtubules and may allow the NDC80 complex to track depolymerizing microtubules. This Drosophila lutescens (Fruit fly) protein is Kinetochore protein Spc25.